Reading from the N-terminus, the 410-residue chain is Elongation factor Tu, chloroplastic (410 aa).

Positions 10–213 constitute a tr-type G domain; that stretch reads KPHLNIGTIG…TVDEYIPTPK (204 aa). The segment at 19 to 26 is G1; sequence GHVDHGKT. Residue 19-26 participates in GTP binding; it reads GHVDHGKT. Threonine 26 serves as a coordination point for Mg(2+). The tract at residues 60–64 is G2; it reads GITIN. Residues 81–84 are G3; it reads DCPG. GTP contacts are provided by residues 81–85 and 136–139; these read DCPGH and NKAD. The interval 136-139 is G4; it reads NKAD. Positions 174-176 are G5; that stretch reads SAI.

The protein belongs to the TRAFAC class translation factor GTPase superfamily. Classic translation factor GTPase family. EF-Tu/EF-1A subfamily.

The protein resides in the plastid. The protein localises to the chloroplast. The catalysed reaction is GTP + H2O = GDP + phosphate + H(+). Its function is as follows. GTP hydrolase that promotes the GTP-dependent binding of aminoacyl-tRNA to the A-site of ribosomes during protein biosynthesis. The sequence is that of Elongation factor Tu, chloroplastic (tufA) from Codium fragile (Dead man's fingers).